A 677-amino-acid polypeptide reads, in one-letter code: Methionine--tRNA ligase (677 aa).

The 'HIGH' region motif lies at 15 to 25; the sequence is PYANGSIHLGH. Positions 146, 149, 159, and 162 each coordinate Zn(2+). The 'KMSKS' region motif lies at 333 to 337; sequence KMSKS. ATP is bound at residue lysine 336. Positions 575-677 constitute a tRNA-binding domain; it reads DFAKIDLRVA…DGAKPGQQVK (103 aa).

The protein belongs to the class-I aminoacyl-tRNA synthetase family. MetG type 1 subfamily. In terms of assembly, homodimer. The cofactor is Zn(2+).

It localises to the cytoplasm. It carries out the reaction tRNA(Met) + L-methionine + ATP = L-methionyl-tRNA(Met) + AMP + diphosphate. Is required not only for elongation of protein synthesis but also for the initiation of all mRNA translation through initiator tRNA(fMet) aminoacylation. This is Methionine--tRNA ligase from Salmonella typhi.